We begin with the raw amino-acid sequence, 270 residues long: Glutamate racemase (270 aa).

Residues 15–16 (DS) and 47–48 (YG) contribute to the substrate site. C78 (proton donor/acceptor) is an active-site residue. Residue 79–80 (NT) coordinates substrate. The active-site Proton donor/acceptor is the C189. 190-191 (TH) is a binding site for substrate.

The protein belongs to the aspartate/glutamate racemases family.

It catalyses the reaction L-glutamate = D-glutamate. It functions in the pathway cell wall biogenesis; peptidoglycan biosynthesis. Functionally, provides the (R)-glutamate required for cell wall biosynthesis. The sequence is that of Glutamate racemase from Syntrophus aciditrophicus (strain SB).